Consider the following 425-residue polypeptide: Peroxisomal membrane protein PEX14 (425 aa).

Disordered stretches follow at residues 49–89 (RSQG…YRNA) and 247–425 (DEPI…AAQS). The segment covering 56–76 (SSSVASQVSSYSPSASQSSVA) has biased composition (low complexity). Positions 89–97 (APPLPERDW) match the SH3-binding motif. Residues 256–297 (PSLTTGANSLTSESSGRSSIPHSQSVPIRTQLTTPPSDSDTS) are compositionally biased toward polar residues. Basic and acidic residues-rich tracts occupy residues 315–324 (DILRKEKNRT) and 333–366 (LGKD…PEED).

It belongs to the peroxin-14 family. In terms of assembly, interacts with PEX13 (via SH3 domain); forming the PEX13-PEX14 docking complex. Interacts with PEX5 (via WxxxF/Y motifs). Interacts with PEX20 (via WxxxF/Y motifs). Interacts with PEX3, PEX7, PEX8 and PEX17. Phosphorylated on serine or threonine residues.

It is found in the peroxisome membrane. Functionally, component of the PEX13-PEX14 docking complex, a translocon channel that specifically mediates the import of peroxisomal cargo proteins bound to PEX5 or PEX20 receptors. The PEX13-PEX14 docking complex forms a large import pore which can be opened to a diameter of about 9 nm. Mechanistically, PEX5 (or PEX20) receptor along with cargo proteins associates with the PEX14 subunit of the PEX13-PEX14 docking complex in the cytosol, leading to the insertion of the receptor into the organelle membrane with the concomitant translocation of the cargo into the peroxisome matrix. This chain is Peroxisomal membrane protein PEX14, found in Komagataella pastoris (Yeast).